Here is a 64-residue protein sequence, read N- to C-terminus: Alpha-like toxin Lqh6 (64 aa).

An LCN-type CS-alpha/beta domain is found at 2 to 63; the sequence is RDGYIAQPEN…GIIVDGVKCH (62 aa). Cystine bridges form between cysteine 12–cysteine 62, cysteine 16–cysteine 34, cysteine 20–cysteine 44, and cysteine 24–cysteine 46. Lysine 64 carries the post-translational modification Lysine amide.

The protein belongs to the long (4 C-C) scorpion toxin superfamily. Sodium channel inhibitor family. Alpha subfamily. In terms of tissue distribution, expressed by the venom gland.

It localises to the secreted. In terms of biological role, alpha toxins bind voltage-independently at site-3 of sodium channels (Nav) and inhibit the inactivation of the activated channels, thereby blocking neuronal transmission. This toxin is highly toxic to insects and mice, and inhibits the binding of alpha-toxin to cockroach neuronal membranes. The protein is Alpha-like toxin Lqh6 of Leiurus hebraeus (Hebrew deathstalker scorpion).